Consider the following 82-residue polypeptide: EMBRYO SURROUNDING FACTOR 1.2 (82 aa).

An N-terminal signal peptide occupies residues 1 to 23; the sequence is MKSQTVLISIFIFSFFALHQCMQ. Intrachain disulfides connect Cys-40–Cys-56, Cys-45–Cys-77, Cys-54–Cys-71, and Cys-57–Cys-64.

Belongs to the MEG family. As to expression, expressed exclusively in ovule embryo sacs and in early developing endosperms.

Maternally-contributed central cell peptide regulating suspensor development and correct auxin distribution in early developing embryos. This Arabidopsis thaliana (Mouse-ear cress) protein is EMBRYO SURROUNDING FACTOR 1.2 (ESF1.2).